The sequence spans 302 residues: Glycine--tRNA ligase alpha subunit (302 aa).

It belongs to the class-II aminoacyl-tRNA synthetase family. Tetramer of two alpha and two beta subunits.

The protein localises to the cytoplasm. The catalysed reaction is tRNA(Gly) + glycine + ATP = glycyl-tRNA(Gly) + AMP + diphosphate. The protein is Glycine--tRNA ligase alpha subunit of Baumannia cicadellinicola subsp. Homalodisca coagulata.